The primary structure comprises 629 residues: Rho GTPase-activating protein conundrum (629 aa).

The required for interaction with Moe stretch occupies residues 185-294; that stretch reads PPKSGTYADI…CRDSSSLDSC (110 aa). The interval 237 to 261 is disordered; that stretch reads SIGRSKESRSENDARSQKKKSSEVL. Positions 240–258 are enriched in basic and acidic residues; the sequence is RSKESRSENDARSQKKKSS. Residues 359–565 form the Rho-GAP domain; it reads VSINALIRRD…ILILRGEKLF (207 aa).

As to quaternary structure, interacts with Moe (via FERM domain).

It localises to the cytoplasm. The protein localises to the cell membrane. The protein resides in the cell cortex. Its subcellular location is the cell junction. In terms of biological role, GTPase-activating protein (GAP) for Rho1; functions with the ERM protein Moe to regulate Rho1 and control proliferation in the developing epithelium. Recruited by Moe to the cell cortex where it negatively regulates Rho1 activity. Can also promote cell proliferation independently of its GAP activity, perhaps by acting with Arf6 to positively regulate Rac1. This Drosophila melanogaster (Fruit fly) protein is Rho GTPase-activating protein conundrum.